We begin with the raw amino-acid sequence, 142 residues long: Hemoglobin subunit alpha (142 aa).

The Globin domain occupies 2–142; it reads VLSPADKSNV…VSTVLTSKYR (141 aa). The residue at position 4 (S4) is a Phosphoserine. An N6-succinyllysine mark is found at K8 and K12. Residue K17 is modified to N6-acetyllysine; alternate. Residue K17 is modified to N6-succinyllysine; alternate. Y25 is modified (phosphotyrosine). Residue S36 is modified to Phosphoserine. K41 carries the post-translational modification N6-succinyllysine. S50 is modified (phosphoserine). H59 provides a ligand contact to O2. Residue H88 coordinates heme b. S103 carries the post-translational modification Phosphoserine. At T109 the chain carries Phosphothreonine. A phosphoserine mark is found at S125 and S132. Residues T135 and T138 each carry the phosphothreonine modification. Phosphoserine is present on S139.

Belongs to the globin family. In terms of assembly, heterotetramer of two alpha chains and two beta chains. In terms of tissue distribution, red blood cells.

Functionally, involved in oxygen transport from the lung to the various peripheral tissues. In terms of biological role, hemopressin acts as an antagonist peptide of the cannabinoid receptor CNR1. Hemopressin-binding efficiently blocks cannabinoid receptor CNR1 and subsequent signaling. The protein is Hemoglobin subunit alpha (HBA) of Ateles geoffroyi (Black-handed spider monkey).